The chain runs to 110 residues: UPF0122 protein SGO_1122 (110 aa).

It belongs to the UPF0122 family.

Functionally, might take part in the signal recognition particle (SRP) pathway. This is inferred from the conservation of its genetic proximity to ftsY/ffh. May be a regulatory protein. The sequence is that of UPF0122 protein SGO_1122 from Streptococcus gordonii (strain Challis / ATCC 35105 / BCRC 15272 / CH1 / DL1 / V288).